Here is a 354-residue protein sequence, read N- to C-terminus: MSKVKSITRESWILSTFPEWGSWLNEEIEQEQVAPGTFAMWWLGCTGIWLKSEGGTNVCVDFWCGTGKQSHGNPLMKQGHQMQRMAGVKKLQPNLRTTPFVLDPFAIRQIDAVLATHDHNDHIDVNVAAAVMQNCADDVPFIGPKTCVDLWIGWGVPKERCIVVKPGDVVKVKDIEIHALDAFDRTALITLPADQKAAGVLPDGMDDRAVNYLFKTPGGSLYHSGDSHYSNYYAKHGNEHQIDVALGSYGENPRGITDKMTSADMLRMGEALNAKVVIPFHHDIWSNFQAAPQEIRVLWEMKKDRLKYGFKPFIWQVGGKFTWPLDKDNLEYHYPRGFDDCFTIEPDLPFKSFL.

This sequence belongs to the UlaG family. A divalent metal cation serves as cofactor.

It localises to the cytoplasm. It catalyses the reaction L-ascorbate 6-phosphate + H2O = 3-dehydro-L-gulonate 6-phosphate. It functions in the pathway cofactor degradation; L-ascorbate degradation; D-xylulose 5-phosphate from L-ascorbate: step 1/4. Probably catalyzes the hydrolysis of L-ascorbate-6-P into 3-keto-L-gulonate-6-P. Is essential for L-ascorbate utilization under anaerobic conditions. The polypeptide is Probable L-ascorbate-6-phosphate lactonase UlaG (Shigella boydii serotype 18 (strain CDC 3083-94 / BS512)).